The following is a 1056-amino-acid chain: RNA cytidine acetyltransferase (1056 aa).

286-295 (GRGKSAALGI) contacts ATP. A compositionally biased stretch (polar residues) spans 433–446 (QNNTSGRESTQTAV). Positions 433–463 (QNNTSGRESTQTAVVSRDNKEKDSHLHSQSR) are disordered. The span at 449 to 463 (RDNKEKDSHLHSQSR) shows a compositional bias: basic and acidic residues. Arg475 contacts ATP. Positions 566–706 (VLLPPIDPKD…VKLRDAKTLP (141 aa)) constitute an N-acetyltransferase domain. Acetyl-CoA is bound by residues 638–640 (IAT), 645–651 (ASMGYGS), and Asn739. A phosphoserine mark is found at Ser1001, Ser1007, and Ser1010.

Belongs to the RNA cytidine acetyltransferase family. NAT10 subfamily. Interacts with TAN1. Associates with 90S pre-ribosomal particles.

The protein localises to the nucleus. The protein resides in the nucleolus. It catalyses the reaction a cytidine in 18S rRNA + acetyl-CoA + ATP + H2O = an N(4)-acetylcytidine in 18S rRNA + ADP + phosphate + CoA + H(+). The catalysed reaction is a cytidine in tRNA + acetyl-CoA + ATP + H2O = an N(4)-acetylcytidine in tRNA + ADP + phosphate + CoA + H(+). Its function is as follows. RNA cytidine acetyltransferase with specificity toward both 18S rRNA and tRNAs. Catalyzes the formation of N(4)-acetylcytidine (ac4C) at positions 1280 and 1773 in 18S rRNA. Required for early nucleolar cleavages of precursor rRNA at sites A0, A1 and A2 during 18S rRNA synthesis. Catalyzes the formation of ac4C at position 12 in serine and leucine tRNAs. Requires the tRNA-binding adapter protein TAN1 for full tRNA acetyltransferase activity but not for 18S rRNA acetylation. The sequence is that of RNA cytidine acetyltransferase from Saccharomyces cerevisiae (strain ATCC 204508 / S288c) (Baker's yeast).